Consider the following 394-residue polypeptide: Mitogen-activated protein kinase 2 (394 aa).

Gly residues predominate over residues 1 to 31 (MRMEGGGGGGHGHHGGGGGGHGHHGGIGGGE). The tract at residues 1–33 (MRMEGGGGGGHGHHGGGGGGHGHHGGIGGGEAQ) is disordered. A Protein kinase domain is found at 61–347 (VPPIRPVGRG…VDEALCHPYL (287 aa)). Residues 67 to 75 (VGRGACGII) and Lys90 each bind ATP. Residue Asp187 is the Proton acceptor of the active site. Position 221 is a phosphotyrosine (Tyr221).

The protein belongs to the protein kinase superfamily. CMGC Ser/Thr protein kinase family. MAP kinase subfamily. Post-translationally, the phosphorylation on Tyr-221 activates the enzyme. A conserved Thr, which must also be phosphorylated to activate the enzyme in closely related sequences, is replaced by Met-219 in this sequence.

It carries out the reaction L-seryl-[protein] + ATP = O-phospho-L-seryl-[protein] + ADP + H(+). The enzyme catalyses L-threonyl-[protein] + ATP = O-phospho-L-threonyl-[protein] + ADP + H(+). This chain is Mitogen-activated protein kinase 2 (MPK2), found in Oryza sativa subsp. japonica (Rice).